Consider the following 430-residue polypeptide: Tol-Pal system protein TolB (430 aa).

A signal peptide spans 1-21; sequence MKQAFRVALGFLVLWASVLHA.

The protein belongs to the TolB family. The Tol-Pal system is composed of five core proteins: the inner membrane proteins TolA, TolQ and TolR, the periplasmic protein TolB and the outer membrane protein Pal. They form a network linking the inner and outer membranes and the peptidoglycan layer.

It localises to the periplasm. Its function is as follows. Part of the Tol-Pal system, which plays a role in outer membrane invagination during cell division and is important for maintaining outer membrane integrity. TolB occupies a key intermediary position in the Tol-Pal system because it communicates directly with both membrane-embedded components, Pal in the outer membrane and TolA in the inner membrane. This Yersinia pestis protein is Tol-Pal system protein TolB.